A 399-amino-acid chain; its full sequence is 4-hydroxy-3-methylbut-2-enyl diphosphate reductase (399 aa).

Residue Cys66 coordinates [4Fe-4S] cluster. His96 is a binding site for (2E)-4-hydroxy-3-methylbut-2-enyl diphosphate. His96 lines the dimethylallyl diphosphate pocket. His96 is an isopentenyl diphosphate binding site. Cys157 is a binding site for [4Fe-4S] cluster. His185 is a (2E)-4-hydroxy-3-methylbut-2-enyl diphosphate binding site. Residue His185 coordinates dimethylallyl diphosphate. Isopentenyl diphosphate is bound at residue His185. Catalysis depends on Glu187, which acts as the Proton donor. Thr250 serves as a coordination point for (2E)-4-hydroxy-3-methylbut-2-enyl diphosphate. Cys288 serves as a coordination point for [4Fe-4S] cluster. Residues Ser317, Ser318, Asn319, and Ser380 each contribute to the (2E)-4-hydroxy-3-methylbut-2-enyl diphosphate site. Positions 317, 318, 319, and 380 each coordinate dimethylallyl diphosphate. Positions 317, 318, 319, and 380 each coordinate isopentenyl diphosphate.

Belongs to the IspH family. [4Fe-4S] cluster is required as a cofactor.

The catalysed reaction is isopentenyl diphosphate + 2 oxidized [2Fe-2S]-[ferredoxin] + H2O = (2E)-4-hydroxy-3-methylbut-2-enyl diphosphate + 2 reduced [2Fe-2S]-[ferredoxin] + 2 H(+). It catalyses the reaction dimethylallyl diphosphate + 2 oxidized [2Fe-2S]-[ferredoxin] + H2O = (2E)-4-hydroxy-3-methylbut-2-enyl diphosphate + 2 reduced [2Fe-2S]-[ferredoxin] + 2 H(+). It participates in isoprenoid biosynthesis; dimethylallyl diphosphate biosynthesis; dimethylallyl diphosphate from (2E)-4-hydroxy-3-methylbutenyl diphosphate: step 1/1. The protein operates within isoprenoid biosynthesis; isopentenyl diphosphate biosynthesis via DXP pathway; isopentenyl diphosphate from 1-deoxy-D-xylulose 5-phosphate: step 6/6. Functionally, catalyzes the conversion of 1-hydroxy-2-methyl-2-(E)-butenyl 4-diphosphate (HMBPP) into a mixture of isopentenyl diphosphate (IPP) and dimethylallyl diphosphate (DMAPP). Acts in the terminal step of the DOXP/MEP pathway for isoprenoid precursor biosynthesis. The sequence is that of 4-hydroxy-3-methylbut-2-enyl diphosphate reductase from Synechococcus sp. (strain CC9605).